A 63-amino-acid chain; its full sequence is Small ribosomal subunit protein eS27 (63 aa).

Zn(2+) is bound by residues cysteine 18, cysteine 21, cysteine 37, and cysteine 40. The C4-type zinc finger occupies 18–40; the sequence is CLDCGNQQVVFDRAASYVQCIIC.

The protein belongs to the eukaryotic ribosomal protein eS27 family. As to quaternary structure, part of the 30S ribosomal subunit. Requires Zn(2+) as cofactor.

The sequence is that of Small ribosomal subunit protein eS27 from Methanothermobacter thermautotrophicus (strain ATCC 29096 / DSM 1053 / JCM 10044 / NBRC 100330 / Delta H) (Methanobacterium thermoautotrophicum).